A 288-amino-acid polypeptide reads, in one-letter code: NH(3)-dependent NAD(+) synthetase (288 aa).

46-53 contributes to the ATP binding site; that stretch reads GISGGQDS. Asp52 contributes to the Mg(2+) binding site. Position 153 (Arg153) interacts with deamido-NAD(+). Residue Thr173 participates in ATP binding. A Mg(2+)-binding site is contributed by Glu178. Deamido-NAD(+) is bound by residues Lys186 and Asp193. The ATP site is built by Lys202 and Thr224. 273 to 274 is a deamido-NAD(+) binding site; that stretch reads HK.

Belongs to the NAD synthetase family. In terms of assembly, homodimer.

It catalyses the reaction deamido-NAD(+) + NH4(+) + ATP = AMP + diphosphate + NAD(+) + H(+). It participates in cofactor biosynthesis; NAD(+) biosynthesis; NAD(+) from deamido-NAD(+) (ammonia route): step 1/1. Functionally, catalyzes the ATP-dependent amidation of deamido-NAD to form NAD. Uses ammonia as a nitrogen source. This chain is NH(3)-dependent NAD(+) synthetase, found in Deinococcus geothermalis (strain DSM 11300 / CIP 105573 / AG-3a).